Consider the following 189-residue polypeptide: Putative manganese efflux pump MntP (189 aa).

6 consecutive transmembrane segments (helical) span residues 2-22 (SLTE…AVSI), 36-56 (ILQM…IGYY), 71-91 (WIAF…SITA), 106-126 (LLLV…VSLS), 132-152 (ILYS…AAIL), and 167-187 (IVGG…HMFF).

The protein belongs to the MntP (TC 9.B.29) family.

The protein resides in the cell membrane. Probably functions as a manganese efflux pump. This is Putative manganese efflux pump MntP from Ruminiclostridium cellulolyticum (strain ATCC 35319 / DSM 5812 / JCM 6584 / H10) (Clostridium cellulolyticum).